A 1025-amino-acid polypeptide reads, in one-letter code: Multidrug resistance protein MdtC (1025 aa).

The next 12 membrane-spanning stretches (helical) occupy residues 3–23, 333–353, 360–380, 387–407, 431–451, 463–483, 528–548, 853–873, 875–895, 897–917, 953–973, and 984–1004; these read FFAL…AITL, EVEQ…FLFL, IIPA…MYLC, LSLM…IVVL, VGFT…PLLL, FAVT…TLTP, LVGV…ISIP, VILI…LYES, VHPL…LLAL, LFNA…IGIV, PIMM…LSGG, and ITIV…TPVV.

It belongs to the resistance-nodulation-cell division (RND) (TC 2.A.6) family. MdtC subfamily. In terms of assembly, part of a tripartite efflux system composed of MdtA, MdtB and MdtC. MdtC forms a heteromultimer with MdtB.

The protein resides in the cell inner membrane. Its function is as follows. The MdtABC tripartite complex confers resistance against novobiocin and deoxycholate. The chain is Multidrug resistance protein MdtC from Escherichia coli O139:H28 (strain E24377A / ETEC).